A 239-amino-acid chain; its full sequence is Phosphoribosylaminoimidazole-succinocarboxamide synthase (239 aa).

This sequence belongs to the SAICAR synthetase family.

The catalysed reaction is 5-amino-1-(5-phospho-D-ribosyl)imidazole-4-carboxylate + L-aspartate + ATP = (2S)-2-[5-amino-1-(5-phospho-beta-D-ribosyl)imidazole-4-carboxamido]succinate + ADP + phosphate + 2 H(+). It participates in purine metabolism; IMP biosynthesis via de novo pathway; 5-amino-1-(5-phospho-D-ribosyl)imidazole-4-carboxamide from 5-amino-1-(5-phospho-D-ribosyl)imidazole-4-carboxylate: step 1/2. The sequence is that of Phosphoribosylaminoimidazole-succinocarboxamide synthase from Chlorobium luteolum (strain DSM 273 / BCRC 81028 / 2530) (Pelodictyon luteolum).